The following is a 185-amino-acid chain: Ribosome-recycling factor (185 aa).

The protein belongs to the RRF family.

It is found in the cytoplasm. In terms of biological role, responsible for the release of ribosomes from messenger RNA at the termination of protein biosynthesis. May increase the efficiency of translation by recycling ribosomes from one round of translation to another. In Azoarcus sp. (strain BH72), this protein is Ribosome-recycling factor.